A 218-amino-acid chain; its full sequence is Small ribosomal subunit protein uS3c (218 aa).

Positions 47-117 (VRTHIRNSSN…KLKITLSEID (71 aa)) constitute a KH type-2 domain.

This sequence belongs to the universal ribosomal protein uS3 family. Part of the 30S ribosomal subunit.

It is found in the plastid. The protein localises to the chloroplast. This Spirogyra maxima (Green alga) protein is Small ribosomal subunit protein uS3c (rps3).